A 312-amino-acid chain; its full sequence is 4-hydroxy-3-methylbut-2-enyl diphosphate reductase (312 aa).

Cysteine 14 contributes to the [4Fe-4S] cluster binding site. (2E)-4-hydroxy-3-methylbut-2-enyl diphosphate contacts are provided by histidine 43 and histidine 76. Residues histidine 43 and histidine 76 each contribute to the dimethylallyl diphosphate site. Isopentenyl diphosphate contacts are provided by histidine 43 and histidine 76. Residue cysteine 98 coordinates [4Fe-4S] cluster. Histidine 125 serves as a coordination point for (2E)-4-hydroxy-3-methylbut-2-enyl diphosphate. Histidine 125 contributes to the dimethylallyl diphosphate binding site. Histidine 125 contributes to the isopentenyl diphosphate binding site. The active-site Proton donor is the glutamate 127. Threonine 165 is a (2E)-4-hydroxy-3-methylbut-2-enyl diphosphate binding site. Cysteine 195 provides a ligand contact to [4Fe-4S] cluster. Residues serine 223, serine 224, asparagine 225, and serine 269 each contribute to the (2E)-4-hydroxy-3-methylbut-2-enyl diphosphate site. Residues serine 223, serine 224, asparagine 225, and serine 269 each contribute to the dimethylallyl diphosphate site. Positions 223, 224, 225, and 269 each coordinate isopentenyl diphosphate.

This sequence belongs to the IspH family. Requires [4Fe-4S] cluster as cofactor.

It catalyses the reaction isopentenyl diphosphate + 2 oxidized [2Fe-2S]-[ferredoxin] + H2O = (2E)-4-hydroxy-3-methylbut-2-enyl diphosphate + 2 reduced [2Fe-2S]-[ferredoxin] + 2 H(+). The catalysed reaction is dimethylallyl diphosphate + 2 oxidized [2Fe-2S]-[ferredoxin] + H2O = (2E)-4-hydroxy-3-methylbut-2-enyl diphosphate + 2 reduced [2Fe-2S]-[ferredoxin] + 2 H(+). Its pathway is isoprenoid biosynthesis; dimethylallyl diphosphate biosynthesis; dimethylallyl diphosphate from (2E)-4-hydroxy-3-methylbutenyl diphosphate: step 1/1. It participates in isoprenoid biosynthesis; isopentenyl diphosphate biosynthesis via DXP pathway; isopentenyl diphosphate from 1-deoxy-D-xylulose 5-phosphate: step 6/6. Its function is as follows. Catalyzes the conversion of 1-hydroxy-2-methyl-2-(E)-butenyl 4-diphosphate (HMBPP) into a mixture of isopentenyl diphosphate (IPP) and dimethylallyl diphosphate (DMAPP). Acts in the terminal step of the DOXP/MEP pathway for isoprenoid precursor biosynthesis. This is 4-hydroxy-3-methylbut-2-enyl diphosphate reductase from Leptospira interrogans serogroup Icterohaemorrhagiae serovar copenhageni (strain Fiocruz L1-130).